We begin with the raw amino-acid sequence, 292 residues long: tRNA dimethylallyltransferase (292 aa).

5-12 (APTGAGKT) lines the ATP pocket. 7–12 (TGAGKT) is a substrate binding site. The interval 29–32 (DSRQ) is interaction with substrate tRNA.

Belongs to the IPP transferase family. Monomer. Mg(2+) serves as cofactor.

It carries out the reaction adenosine(37) in tRNA + dimethylallyl diphosphate = N(6)-dimethylallyladenosine(37) in tRNA + diphosphate. Catalyzes the transfer of a dimethylallyl group onto the adenine at position 37 in tRNAs that read codons beginning with uridine, leading to the formation of N6-(dimethylallyl)adenosine (i(6)A). This Leptospira borgpetersenii serovar Hardjo-bovis (strain JB197) protein is tRNA dimethylallyltransferase.